We begin with the raw amino-acid sequence, 968 residues long: RNA polymerase-associated protein RapA (968 aa).

Residues 163 to 332 form the Helicase ATP-binding domain; the sequence is EVGQRFAPRV…FARLRLLDPD (170 aa). 176-183 provides a ligand contact to ATP; the sequence is DEVGLGKT. Residues 278-281 carry the DEAH box motif; sequence DEAH. One can recognise a Helicase C-terminal domain in the interval 491-678; it reads RVDWLIDFLK…NTKSRYQELK (188 aa).

This sequence belongs to the SNF2/RAD54 helicase family. RapA subfamily. Interacts with the RNAP. Has a higher affinity for the core RNAP than for the holoenzyme. Its ATPase activity is stimulated by binding to RNAP.

Its function is as follows. Transcription regulator that activates transcription by stimulating RNA polymerase (RNAP) recycling in case of stress conditions such as supercoiled DNA or high salt concentrations. Probably acts by releasing the RNAP, when it is trapped or immobilized on tightly supercoiled DNA. Does not activate transcription on linear DNA. Probably not involved in DNA repair. The polypeptide is RNA polymerase-associated protein RapA (Shewanella piezotolerans (strain WP3 / JCM 13877)).